Here is a 277-residue protein sequence, read N- to C-terminus: Large ribosomal subunit protein uL2 (277 aa).

Disordered stretches follow at residues 38 to 58 (HRKGGRNNQGRLTVRHQGGGH) and 219 to 277 (TVRG…RKNK).

The protein belongs to the universal ribosomal protein uL2 family. As to quaternary structure, part of the 50S ribosomal subunit. Forms a bridge to the 30S subunit in the 70S ribosome.

Functionally, one of the primary rRNA binding proteins. Required for association of the 30S and 50S subunits to form the 70S ribosome, for tRNA binding and peptide bond formation. It has been suggested to have peptidyltransferase activity; this is somewhat controversial. Makes several contacts with the 16S rRNA in the 70S ribosome. This Bacillus pumilus (strain SAFR-032) protein is Large ribosomal subunit protein uL2.